Consider the following 481-residue polypeptide: Docking protein 1 (481 aa).

The residue at position 1 (methionine 1) is an N-acetylmethionine. Residues 4–119 (AVMEGPLFLQ…WVQTLCRNAF (116 aa)) enclose the PH domain. At serine 48 the chain carries Phosphoserine. The IRS-type PTB domain maps to 151-259 (EGSQFWVTVQ…HRQKAQGKAG (109 aa)). Phosphoserine occurs at positions 269 and 291. Residues 270–293 (HEGEVAEGKLPSPPGPQELLDSPP) are disordered. Tyrosine 296 is modified (phosphotyrosine). The interval 307 to 329 (PCPSQDSLYSDPLDSTSAQAGEG) is disordered. Positions 310-325 (SQDSLYSDPLDSTSAQ) are enriched in polar residues. A phosphotyrosine mark is found at tyrosine 337 and tyrosine 341. Tyrosine 362 carries the phosphotyrosine; by INSR modification. A Phosphotyrosine modification is found at tyrosine 377. At tyrosine 398 the chain carries Phosphotyrosine; by INSR. Positions 404–481 (PATDDYAVPP…KTGVKSEGST (78 aa)) are disordered. Tyrosine 409 carries the post-translational modification Phosphotyrosine. The residue at position 416 (serine 416) is a Phosphoserine. A compositionally biased stretch (polar residues) spans 436-458 (ATGSGIKSHNSALYSQVQKSGAS). A Phosphotyrosine modification is found at tyrosine 449. Serine 460 carries the post-translational modification Phosphoserine.

This sequence belongs to the DOK family. Type A subfamily. Interacts with ABL1. Interacts with RasGAP and INPP5D/SHIP1. Interacts directly with phosphorylated ITGB3. Interacts with SRMS (via the SH2 and SH3 domains). Constitutively tyrosine-phosphorylated. Phosphorylated by TEC. Phosphorylated by LYN. Phosphorylated on tyrosine residues by the insulin receptor kinase. Results in the negative regulation of the insulin signaling pathway. Phosphorylated on tyrosine residues by SRMS. Expressed in pancreas, heart, leukocyte and spleen. Expressed in both resting and activated peripheral blood T-cells. Expressed in breast cancer.

The protein localises to the cytoplasm. The protein resides in the nucleus. It localises to the perinuclear region. Functionally, DOK proteins are enzymatically inert adaptor or scaffolding proteins. They provide a docking platform for the assembly of multimolecular signaling complexes. DOK1 appears to be a negative regulator of the insulin signaling pathway. Modulates integrin activation by competing with talin for the same binding site on ITGB3. The sequence is that of Docking protein 1 (DOK1) from Homo sapiens (Human).